The following is a 442-amino-acid chain: UPF0489 protein C5orf22 (442 aa).

Positions 175–210 (SSAKKPKLALEDSENTASTNCDSSSEGLEKDTATQR) are disordered. Over residues 189–200 (NTASTNCDSSSE) the composition is skewed to polar residues.

Belongs to the UPF0489 family.

This is UPF0489 protein C5orf22 (C5orf22) from Homo sapiens (Human).